A 658-amino-acid polypeptide reads, in one-letter code: Carnitine O-palmitoyltransferase 2, mitochondrial (658 aa).

A mitochondrion-targeting transit peptide spans 1 to 25 (MMPRLLFRAWPRCPSLVLGAPSRPL). At 26–178 (SAVSGPDDYL…GLLEPEVFHL (153 aa)) the chain is on the mitochondrial matrix side. N6-succinyllysine occurs at positions 69 and 85. The segment at residues 179–208 (NPSKSDTDAFKRLIRFVPPSLSWYGAYLVN) is an intramembrane region (note=Mitochondrial inner membrane). Residues 209-658 (AYPLDMSQYF…DALEGKAIKT (450 aa)) are Mitochondrial matrix-facing. K239 bears the N6-acetyllysine; alternate mark. K239 bears the N6-succinyllysine; alternate mark. At K305 the chain carries N6-acetyllysine. H372 functions as the Proton acceptor in the catalytic mechanism. Residues K424 and K439 each carry the N6-succinyllysine modification. 452–464 (GKEFLKKKQLSPD) lines the CoA pocket. Y486, S488, and T499 together coordinate (R)-carnitine. 2 positions are modified to N6-acetyllysine; alternate: K510 and K544. 2 positions are modified to N6-succinyllysine; alternate: K510 and K544.

This sequence belongs to the carnitine/choline acetyltransferase family.

The protein localises to the mitochondrion inner membrane. The catalysed reaction is (R)-carnitine + hexadecanoyl-CoA = O-hexadecanoyl-(R)-carnitine + CoA. It carries out the reaction octanoyl-CoA + (R)-carnitine = O-octanoyl-(R)-carnitine + CoA. The enzyme catalyses decanoyl-CoA + (R)-carnitine = O-decanoyl-(R)-carnitine + CoA. It catalyses the reaction dodecanoyl-CoA + (R)-carnitine = O-dodecanoyl-R-carnitine + CoA. The catalysed reaction is tetradecanoyl-CoA + (R)-carnitine = O-tetradecanoyl-(R)-carnitine + CoA. It carries out the reaction (R)-carnitine + octadecanoyl-CoA = O-octadecanoyl-(R)-carnitine + CoA. The enzyme catalyses eicosanoyl-CoA + (R)-carnitine = O-eicosanoyl-(R)-carnitine + CoA. It catalyses the reaction (9Z)-tetradecenoyl-CoA + (R)-carnitine = O-(9Z)-tetradecenoyl-(R)-carnitine + CoA. The catalysed reaction is (5Z)-tetradecenoyl-CoA + (R)-carnitine = O-(5Z)-tetradecenoyl-(R)-carnitine + CoA. It carries out the reaction (R)-carnitine + (9Z)-octadecenoyl-CoA = O-(9Z)-octadecenoyl-(R)-carnitine + CoA. The enzyme catalyses 4,8-dimethylnonanoyl-CoA + (R)-carnitine = O-4,8-dimethylnonanoyl-(R)-carnitine + CoA. It functions in the pathway lipid metabolism; fatty acid beta-oxidation. Functionally, involved in the intramitochondrial synthesis of acylcarnitines from accumulated acyl-CoA metabolites. Reconverts acylcarnitines back into the respective acyl-CoA esters that can then undergo beta-oxidation, an essential step for the mitochondrial uptake of long-chain fatty acids and their subsequent beta-oxidation in the mitochondrion. Active with medium (C8-C12) and long-chain (C14-C18) acyl-CoA esters. In Rattus norvegicus (Rat), this protein is Carnitine O-palmitoyltransferase 2, mitochondrial.